Consider the following 366-residue polypeptide: Lysophosphatidic acid receptor 1-B (366 aa).

Residues 1-52 (MTSLSEFVSEPIGMMSQTSAASESQCYYNETIAFFYNRSGKYLDTEWNAVSK) lie on the Extracellular side of the membrane. Cystine bridges form between C26/C192 and C190/C197. Residues N29 and N37 are each glycosylated (N-linked (GlcNAc...) asparagine). Residue K41 participates in a 1-acyl-sn-glycero-3-phosphate binding. The chain crosses the membrane as a helical span at residues 53–77 (LVMGLGITVCIFIMLANLLVMVAIY). Topologically, residues 78-85 (VNRRFHFP) are cytoplasmic. The chain crosses the membrane as a helical span at residues 86-109 (IYYLMANLAAADFFAGLAYFYLMF). Over 110–123 (NTGPNTRRLTVSTW) the chain is Extracellular. Residues 124–146 (LLRQGLIDTSLTASVANLLAIAI) traverse the membrane as a helical segment. 126–131 (RQGLID) serves as a coordination point for a 1-acyl-sn-glycero-3-phosphate. Over 147-165 (ERHITVFRMQLHTRMSNRR) the chain is Cytoplasmic. A helical transmembrane segment spans residues 166–186 (VVVVIVVIWTVAIVMGAIPSV). Over 187-206 (GWNCICDLEHCSNMAPLYSD) the chain is Extracellular. Residues 207-227 (SYLIFWTIFNLVTFVVMVVLY) form a helical membrane-spanning segment. W212 provides a ligand contact to a 1-acyl-sn-glycero-3-phosphate. At 228–257 (AHIFVYVRQRTMRMSRHSSGPRRNRDTMMS) the chain is on the cytoplasmic side. The helical transmembrane segment at 258–282 (LLKTVVIVLGAFIVCWTPGLVLLLL) threads the bilayer. The Extracellular segment spans residues 283 to 296 (DVCCPQCNILAYEK). Cysteines 286 and 289 form a disulfide. Residues 297–317 (FFLLLAEFNSAMNPIIYSYRD) traverse the membrane as a helical segment. Over 318-366 (KEMSATFKQILCCQRTENVNGPTEGSDRSASSLNHTILAGVHSNDHSVV) the chain is Cytoplasmic.

The protein belongs to the G-protein coupled receptor 1 family. Expressed at high levels in oocytes and at lower levels in brain and spinal cord. Below detection level in lung, heart, kidney, liver, muscle, stomach, and intestine.

The protein localises to the cell surface. Its subcellular location is the cell membrane. It is found in the endosome. In terms of biological role, receptor for lysophosphatidic acid (LPA). Plays a role in the reorganization of the actin cytoskeleton, cell migration, differentiation and proliferation, and thereby contributes to the responses to tissue damage and infectious agents. Activates downstream signaling cascades via the G(i)/G(o), G(12)/G(13), and G(q) families of heteromeric G proteins. Signaling inhibits adenylyl cyclase activity and decreases cellular cAMP levels. Signaling triggers an increase of cytoplasmic Ca(2+) levels. Signaling leads to the activation of phospholipase C (PLC) and the formation of inositol 1,4,5-trisphosphate. Signaling mediates activation of down-stream MAP kinases. Contributes to the regulation of cell shape. Promotes Rho-dependent reorganization of the actin cytoskeleton in neuronal cells and neurite retraction. Promotes the activation of Rho and the formation of actin stress fibers. Promotes formation of lamellipodia at the leading edge of migrating cells via activation of Rac. Through its function as lysophosphatidic acid receptor, plays a role in chemotaxis and cell migration, including responses to injury and wounding. Promotes cell proliferation in response to lysophosphatidic acid. In Xenopus laevis (African clawed frog), this protein is Lysophosphatidic acid receptor 1-B (lpar1-b).